The following is a 144-amino-acid chain: Transcriptional regulator SlyA (144 aa).

The 134-residue stretch at 2 to 135 (ESPLGSDLAR…LITLIAKLEH (134 aa)) folds into the HTH marR-type domain. The segment at residues 49–72 (QIQLAKAIGIEQPSLVRTLDQLEE) is a DNA-binding region (H-T-H motif).

Belongs to the SlyA family. As to quaternary structure, homodimer.

Functionally, transcription regulator that can specifically activate or repress expression of target genes. This chain is Transcriptional regulator SlyA, found in Escherichia coli (strain 55989 / EAEC).